We begin with the raw amino-acid sequence, 130 residues long: Large ribosomal subunit protein bL19 (130 aa).

Belongs to the bacterial ribosomal protein bL19 family.

This protein is located at the 30S-50S ribosomal subunit interface and may play a role in the structure and function of the aminoacyl-tRNA binding site. The protein is Large ribosomal subunit protein bL19 of Burkholderia lata (strain ATCC 17760 / DSM 23089 / LMG 22485 / NCIMB 9086 / R18194 / 383).